We begin with the raw amino-acid sequence, 427 residues long: 3-phosphoshikimate 1-carboxyvinyltransferase (427 aa).

Residues Lys22, Ser23, and Arg27 each coordinate 3-phosphoshikimate. Lys22 is a binding site for phosphoenolpyruvate. Phosphoenolpyruvate-binding residues include Gly96 and Arg124. 3-phosphoshikimate contacts are provided by Ser169, Ser170, Gln171, Ser197, Asp313, Asn336, and Lys340. Gln171 lines the phosphoenolpyruvate pocket. Catalysis depends on Asp313, which acts as the Proton acceptor. Positions 344, 386, and 411 each coordinate phosphoenolpyruvate.

It belongs to the EPSP synthase family. Monomer.

It localises to the cytoplasm. It carries out the reaction 3-phosphoshikimate + phosphoenolpyruvate = 5-O-(1-carboxyvinyl)-3-phosphoshikimate + phosphate. It participates in metabolic intermediate biosynthesis; chorismate biosynthesis; chorismate from D-erythrose 4-phosphate and phosphoenolpyruvate: step 6/7. Catalyzes the transfer of the enolpyruvyl moiety of phosphoenolpyruvate (PEP) to the 5-hydroxyl of shikimate-3-phosphate (S3P) to produce enolpyruvyl shikimate-3-phosphate and inorganic phosphate. This Salmonella paratyphi A (strain ATCC 9150 / SARB42) protein is 3-phosphoshikimate 1-carboxyvinyltransferase.